Reading from the N-terminus, the 267-residue chain is Regulatory protein RecX (267 aa).

It belongs to the RecX family.

It localises to the cytoplasm. Modulates RecA activity. The polypeptide is Regulatory protein RecX (Staphylococcus carnosus (strain TM300)).